Here is a 207-residue protein sequence, read N- to C-terminus: Large ribosomal subunit protein bL25 (207 aa).

This sequence belongs to the bacterial ribosomal protein bL25 family. CTC subfamily. As to quaternary structure, part of the 50S ribosomal subunit; part of the 5S rRNA/L5/L18/L25 subcomplex. Contacts the 5S rRNA. Binds to the 5S rRNA independently of L5 and L18.

This is one of the proteins that binds to the 5S RNA in the ribosome where it forms part of the central protuberance. This Orientia tsutsugamushi (strain Ikeda) (Rickettsia tsutsugamushi) protein is Large ribosomal subunit protein bL25.